The primary structure comprises 1663 residues: Complement C3 (1663 aa).

The N-terminal stretch at 1 to 24 (MGPASGSQLLVLLLLLASSPLALG) is a signal peptide. The residue at position 40 (S40) is a Phosphoserine. 13 disulfide bridges follow: C559–C816, C626–C661, C693–C720, C694–C727, C707–C728, C873–C1513, C1101–C1158, C1358–C1489, C1389–C1458, C1506–C1511, C1518–C1590, C1537–C1661, and C1637–C1646. At S671 the chain carries Phosphoserine. Residues 693–728 (CCEDGMRDIPMRYSCQRRARLITQGENCIKAFIDCC) form the Anaphylatoxin-like domain. N-linked (GlcNAc...) asparagine glycosylation is present at N939. S968 is subject to Phosphoserine. The segment at residues 1010–1013 (CGEQ) is a cross-link (isoglutamyl cysteine thioester (Cys-Gln)). Phosphoserine is present on S1321. Positions 1518–1661 (CFMQQSQEKI…FTESMVVYGC (144 aa)) constitute an NTR domain. S1573 is subject to Phosphoserine. The N-linked (GlcNAc...) asparagine glycan is linked to N1617. The segment at 1634-1659 (AEECQDQKYQKQCEELGAFTESMVVY) is interaction with CFP/properdin.

In terms of assembly, in absence of complement activation, the C3 precursor is first processed by the removal of 4 Arg residues, forming two chains, beta and alpha, linked by a disulfide bond. As to quaternary structure, complement C3b is composed of complement C3b and complement C3 beta chains that are associated via disulfide bonds. Non-enzymatic component of the C5 convertase, also named C4bC2bC3b, composed of the serine protease complement C2b (C2), complement C3b, as well as complement C4b (C4). Non-enzymatic component of the C5 convertase of the alternative complement pathways composed of the serine protease complement CFB and complement C3b. Interacts with CFP; interaction takes place together with CFB in the alternative complement system and allows the complex to become active. Interacts with CR1 (via Sushi 8 and Sushi 9 domains). Interacts with CFH. Interacts with CFH. Interacts with CR2. In terms of assembly, during pregnancy, C3dg exists as a complex (probably a 2:2:2 heterohexamer) with AGT and the proform of PRG2. Interacts with CR2 (via the N-terminal Sushi domains 1 and 2). Post-translationally, C3 precursor is first processed by the removal of 4 Arg residues, forming two chains, beta and alpha, linked by a disulfide bond. During activation of the complement systems, the alpha chain is cleaved into C3a and C3b by the C3 convertase: C3b stays linked to the beta chain, while C3a is released in the plasma. The alpha chain is cleaved by the serine protease complement C2b component of the C3 convertase to generate C3a and C3b following activation by the classical, lectin and GZMK complement systems. The alpha chain is cleaved by CFB component of the C3 convertase to generate C3a and C3b following activation by the alternative complement system. In terms of processing, C3a is further processed by carboxypeptidases to release the C-terminal arginine residue generating the acylation stimulating protein (ASP). Levels of ASP are increased in adipocytes in the postprandial period and by insulin and dietary chylomicrons. Complement C3b is rapidly split in two positions by factor I (CFI) and a cofactor (CFH) to form iC3b (inactivated C3b) and C3f which is released. CFI and CFH catalyze proteolytic degradation of already-deposited complement C3b. Then iC3b is slowly cleaved (possibly by CFI) to form C3c (beta chain + alpha' chain fragment 1 + alpha' chain fragment 2), C3dg and C3f. Other proteases produce other fragments such as C3d or C3g. Post-translationally, upon activation, the internal thioester bond reacts with carbohydrate antigens on the target surface to form amide or ester bonds, leading to covalent association with the surface of pathogens. In terms of processing, complement C3b interacts with complement C4b via a thioester linkage. Phosphorylated by FAM20C in the extracellular medium.

Its subcellular location is the secreted. The protein resides in the cell surface. With respect to regulation, complement activation is inhibited by VSIG4. Functionally, precursor of non-enzymatic components of the classical, alternative, lectin and GZMK complement pathways, which consist in a cascade of proteins that leads to phagocytosis and breakdown of pathogens and signaling that strengthens the adaptive immune system. In terms of biological role, non-enzymatic component of C5 convertase. Generated following cleavage by C3 convertase, it covalently attaches to the surface of pathogens, where it acts as an opsonin that marks the surface of antigens for removal. Complement C3b binds covalently via its reactive thioester, to cell surface carbohydrates or immune aggregates. Together with complement C4b, it then recruits the serine protease complement C2b to form the C5 convertase, which cleaves and activate C5, the next component of the complement pathways. In the alternative complement pathway, recruits the serine protease CFB to form the C5 convertase that cleaves and activates C5. Its function is as follows. Mediator of local inflammatory process released following cleavage by C3 convertase. Acts by binding to its receptor, C3AR1, activating G protein-coupled receptor signaling, promoting the phosphorylation, ARRB2-mediated internalization and endocytosis of C3AR1. C3a anaphylatoxin stimulates the activation of immune cells such as mast cells and basophilic leukocytes to release inflammation agents, such as cytokines, chemokines and histamine, which promote inflammation development. Also acts as potent chemoattractant for the migration of macrophages and neutrophils to the inflamed tissues, resulting in neutralization of the inflammatory triggers by multiple ways, such as phagocytosis and generation of reactive oxidants. Adipogenic hormone that stimulates triglyceride synthesis and glucose transport in adipocytes, regulating fat storage and playing a role in postprandial triglyceride clearance. Appears to stimulate triglyceride synthesis via activation of the PLC, MAPK and AKT signaling pathways. Acts by binding to its receptor, C5AR2, activating G protein-coupled receptor signaling, promoting the phosphorylation, ARRB2-mediated internalization and endocytosis of C5AR2. Functionally, acts as a chemoattractant for neutrophils in chronic inflammation. The polypeptide is Complement C3 (Mus musculus (Mouse)).